The chain runs to 478 residues: Putrescine oxidase (478 aa).

15–70 (RDVVVVGAGPAGLMAARTLVAAGRTVAVLEARDRVGGRTWSKTVDGAFLEIGGQWI) lines the FAD pocket.

The protein belongs to the flavin monoamine oxidase family. Requires FAD as cofactor.

It catalyses the reaction putrescine + O2 + H2O = 4-aminobutanal + H2O2 + NH4(+). The chain is Putrescine oxidase (puo) from Kocuria rosea (Deinococcus erythromyxa).